Reading from the N-terminus, the 233-residue chain is Orotidine 5'-phosphate decarboxylase (233 aa).

Residues D12, K34, 61–70 (DWKLHDIGAT), T116, R181, Q190, G210, and R211 each bind substrate. K63 acts as the Proton donor in catalysis.

Belongs to the OMP decarboxylase family. Type 1 subfamily. As to quaternary structure, homodimer.

The catalysed reaction is orotidine 5'-phosphate + H(+) = UMP + CO2. It functions in the pathway pyrimidine metabolism; UMP biosynthesis via de novo pathway; UMP from orotate: step 2/2. In terms of biological role, catalyzes the decarboxylation of orotidine 5'-monophosphate (OMP) to uridine 5'-monophosphate (UMP). This Caulobacter vibrioides (strain ATCC 19089 / CIP 103742 / CB 15) (Caulobacter crescentus) protein is Orotidine 5'-phosphate decarboxylase.